A 211-amino-acid chain; its full sequence is Large ribosomal subunit protein uL3 (211 aa).

Residue Gln150 is modified to N5-methylglutamine.

It belongs to the universal ribosomal protein uL3 family. In terms of assembly, part of the 50S ribosomal subunit. Forms a cluster with proteins L14 and L19. In terms of processing, methylated by PrmB.

Its function is as follows. One of the primary rRNA binding proteins, it binds directly near the 3'-end of the 23S rRNA, where it nucleates assembly of the 50S subunit. This chain is Large ribosomal subunit protein uL3, found in Pseudomonas fluorescens (strain SBW25).